The chain runs to 904 residues: Shieldin complex subunit 2 (904 aa).

Residues 1-60 form a sufficient for interaction with SHLD3 and MAD2L2 region; sequence MSGGSQVHIFWGAPVAPLKMTVSQDTASLMSVADPWKKIHLLYSQHSLYLKDEKQHKNLE. The segment at 1–568 is interaction with ASTE1; the sequence is MSGGSQVHIF…AYVSSKHSYL (568 aa). A mediates interaction with SHLD1 region spans residues 721 to 891; the sequence is KCSGVVLIQA…LQQDFSLLDF (171 aa).

Belongs to the SHLD2 family. In terms of assembly, component of the shieldin complex, consisting of SHLD1, SHLD2, SHLD3 and MAD2L2/REV7. Within the complex, SHLD2 forms a scaffold which interacts with a SHLD3-MAD2L2 subcomplex via its N-terminus, and with SHLD1 via its C-terminus. Interacts with TP53BP1. Interacts with RIF1. Interacts with ASTE1.

It is found in the chromosome. In terms of biological role, component of the shieldin complex, which plays an important role in repair of DNA double-stranded breaks (DSBs). During G1 and S phase of the cell cycle, the complex functions downstream of TP53BP1 to promote non-homologous end joining (NHEJ) and suppress DNA end resection. Mediates various NHEJ-dependent processes including immunoglobulin class-switch recombination, and fusion of unprotected telomeres. The polypeptide is Shieldin complex subunit 2 (Pongo abelii (Sumatran orangutan)).